The chain runs to 89 residues: Large ribosomal subunit protein bL27 (89 aa).

The tract at residues 1–21 is disordered; the sequence is MAHKKAGGSSRNGRDTEGRRL.

It belongs to the bacterial ribosomal protein bL27 family.

The polypeptide is Large ribosomal subunit protein bL27 (Granulibacter bethesdensis (strain ATCC BAA-1260 / CGDNIH1)).